Reading from the N-terminus, the 277-residue chain is 2,3,4,5-tetrahydropyridine-2,6-dicarboxylate N-succinyltransferase (277 aa).

2 residues coordinate substrate: Arg106 and Asp143.

Belongs to the transferase hexapeptide repeat family. In terms of assembly, homotrimer.

It is found in the cytoplasm. The catalysed reaction is (S)-2,3,4,5-tetrahydrodipicolinate + succinyl-CoA + H2O = (S)-2-succinylamino-6-oxoheptanedioate + CoA. It participates in amino-acid biosynthesis; L-lysine biosynthesis via DAP pathway; LL-2,6-diaminopimelate from (S)-tetrahydrodipicolinate (succinylase route): step 1/3. The sequence is that of 2,3,4,5-tetrahydropyridine-2,6-dicarboxylate N-succinyltransferase from Variovorax paradoxus (strain S110).